The following is a 58-amino-acid chain: Arabinogalactan protein 21 (58 aa).

Residues 1–24 (MEAMKMKMMVFIMVVAVAFSAATA) form the signal peptide. Pro30, Pro32, and Pro34 each carry 4-hydroxyproline. 3 O-linked (Ara...) hydroxyproline glycosylation sites follow: Pro30, Pro32, and Pro34. The GPI-anchor amidated serine moiety is linked to residue Ser36. The propeptide at 37 to 58 (DAAMFVPALFASVVALASGFIF) is removed in mature form.

It belongs to the AG-peptide AGP family. Post-translationally, contains 4-hydroxyproline; hydroxylated on Pro-30, Pro-32 and Pro-34. O-glycosylated on hydroxyprolines; noncontiguous hydroxylproline residues are glycosylated with arabinogalactan.

The protein resides in the cell membrane. In terms of biological role, proteoglycan that seems to be implicated in diverse developmental roles such as differentiation, cell-cell recognition, embryogenesis and programmed cell death. This chain is Arabinogalactan protein 21, found in Arabidopsis thaliana (Mouse-ear cress).